A 382-amino-acid polypeptide reads, in one-letter code: Sphingosine kinase 1 (382 aa).

Residues 12–159 (PRPCRVLVLL…MNLLSLHTAS (148 aa)) form the DAGKc domain. ATP is bound by residues 22–24 (NPQ) and 54–58 (TERKN). Residue 79 to 82 (SGDG) participates in substrate binding. The active-site Proton donor/acceptor is the Asp81. ATP is bound by residues Glu86 and 111 to 113 (GSG). 2 consecutive short sequence motifs (nuclear export signal) follow at residues 147–155 (LSPMNLLSL) and 161–169 (LRLYSVLSL). Position 178 (Asp178) interacts with substrate. ATP contacts are provided by Arg185 and Arg191. Thr193 carries the phosphothreonine modification. Phosphoserine is present on Ser225. ATP is bound at residue 340–342 (DGE).

In terms of assembly, interacts with ACY1. Binds to calmodulin. Interacts with SPHKAP. Interacts with CIB1, the interaction occurs in a calcium-dependent manner. Interacts with TRAF2. Interacts with EEF1A1; the interaction enhances SPHK1 kinase activity. Mg(2+) is required as a cofactor. Widely expressed. Expressed in brain (at protein level). Detected in neurons.

The protein resides in the cytoplasm. It is found in the endosome membrane. It localises to the nucleus. The protein localises to the cell membrane. Its subcellular location is the synapse. It carries out the reaction a sphingoid base + ATP = a sphingoid 1-phosphate + ADP + H(+). The catalysed reaction is L-seryl-[protein] + acetyl-CoA = O-acetyl-L-seryl-[protein] + CoA. It catalyses the reaction sphinganine + ATP = sphinganine 1-phosphate + ADP + H(+). The enzyme catalyses sphing-4-enine + ATP = sphing-4-enine 1-phosphate + ADP + H(+). It carries out the reaction 1-O-hexadecyl-2-amino-sn-glycerol + ATP = 1-O-hexadecyl-2-desoxy-2-amino-sn-glycero-3-phosphate + ADP + H(+). With respect to regulation, acetyltransferase activity increases in presence of the kinase substrate, sphingosine. In Purkinje cells, kinase activity on sphingosine increases in presence of VEGFA. In neurons, kinase activity increases during the first 24h in presence of Amyloid-beta protein 42 to decrease after 96h. Its function is as follows. Catalyzes the phosphorylation of sphingosine to form sphingosine 1-phosphate (SPP), a lipid mediator with both intra- and extracellular functions. Also acts on D-erythro-sphingosine and to a lesser extent sphinganine, but not other lipids, such as D,L-threo-dihydrosphingosine, N,N-dimethylsphingosine, diacylglycerol, ceramide, or phosphatidylinositol. In contrast to proapoptotic SPHK2, has a negative effect on intracellular ceramide levels, enhances cell growth and inhibits apoptosis. Involved in the regulation of inflammatory response and neuroinflammation. Via the product sphingosine 1-phosphate, stimulates TRAF2 E3 ubiquitin ligase activity, and promotes activation of NF-kappa-B in response to TNF signaling. In response to TNF and in parallel to NF-kappa-B activation, negatively regulates RANTES induction through p38 MAPK signaling pathway. Involved in endocytic membrane trafficking induced by sphingosine, recruited to dilate endosomes, also plays a role on later stages of endosomal maturation and membrane fusion independently of its kinase activity. In Purkinje cells, seems to be also involved in the regulation of autophagosome-lysosome fusion upon VEGFA. In terms of biological role, has serine acetyltransferase activity on PTGS2/COX2 in an acetyl-CoA dependent manner. The acetyltransferase activity increases in presence of the kinase substrate, sphingosine. During neuroinflammation, through PTGS2 acetylation, promotes neuronal secretion of specialized preresolving mediators (SPMs), especially 15-R-lipoxin A4, which results in an increase of phagocytic microglia. In Mus musculus (Mouse), this protein is Sphingosine kinase 1.